The sequence spans 150 residues: UPF0735 ACT domain-containing protein DSY2247 (150 aa).

Residues 74–149 (TFSLTLENTA…GVRKIEVIGQ (76 aa)) form the ACT domain.

This sequence belongs to the UPF0735 family.

In Desulfitobacterium hafniense (strain Y51), this protein is UPF0735 ACT domain-containing protein DSY2247.